The chain runs to 254 residues: 14-3-3-like protein RA215 (254 aa).

It belongs to the 14-3-3 family.

This chain is 14-3-3-like protein RA215, found in Solanum tuberosum (Potato).